A 90-amino-acid polypeptide reads, in one-letter code: Small ribosomal subunit protein uS15c (90 aa).

Belongs to the universal ribosomal protein uS15 family. As to quaternary structure, part of the 30S ribosomal subunit.

Its subcellular location is the plastid. The protein localises to the chloroplast. The sequence is that of Small ribosomal subunit protein uS15c (rps15) from Buxus microphylla (Littleleaf boxwood).